The following is a 914-amino-acid chain: MFEALKEVLGEINSKLAAVNNELSSKIMSENIVSTRPVAQAQYCGPYKLEKTLGKGQTGLVKTGTHCITGRKVAIKIVNKEKLSESVLQKVEREIAIMKLIEHPHVLHLYDVYENKKYLYLLLEHVSGGELFDYLVRKGRLMSKEARKFFRQIISALDFCHAHNICHRDLKPENLLLDERNNIKVADFGMASLQVEGSMLETSCGSPHYACPEVIRGEKYDGRKADVWSCGVILYALLVGALPFDDDNLRNLLEKVKRGVFHIPHFVPADVQSLLRAMIEVDPGKRYSLADVFKHPWVSGTTKADPELELPMSQVVQTHVIPGEDSIDPDVLRHMNCLGCFKDKQKLINELLSPKHNTEKMVYFLLLDRKRRRPAQEDDTEIVLRGAAQNNDPPKKRTDSSRTSRYPMGSIADGSPINPRKTYGRNQKSGRHSSLGGSPTESPRSSTRDLFGSSSSGSYSARAGEDRDRGRSASRSTNSYHYYTQPVDPQTLAEAARHVRDAQERRESRDSGRGSSRKESKDRSDKSASSSSCKNDASSTSSVPHKYSPPSVMSESVVVSSSTMNSTNSSTNSLIAGNSQTSIGSTSGPWRSKLNNIKNSFLGTPRFHRRKMSNGTAESDSEDSQMIDTTDLVKKSWFGSLASSMSVERDDTHCVPVQGKTLNSIKAELIRAFLQIHELSHSVVGQNCFRVEYKRGPTVGGSVFSRGIKMNVDIIPSPQQVVIAGETPTYVVQFVLLAGPVRRFKRLVEHLSAILQNSTQQRADRQQQAALMVRPRRLSDSSVGSACSDSESNASSINMIARHSDKTETTSATSSDPYGPSPSMRSVGSGTANSYKSPTPHRRNTTAVTASSSSASNRYGPSSSSSGSYSNNADYSYHPEYSQRSNGSSAPKNQYSPGSQRSFAFSMFNKADKV.

Residues 47-298 enclose the Protein kinase domain; that stretch reads YKLEKTLGKG…LADVFKHPWV (252 aa). ATP-binding positions include 53-61 and K76; that span reads LGKGQTGLV. D169 (proton acceptor) is an active-site residue. Disordered stretches follow at residues 375–551, 563–590, and 757–914; these read AQED…SPPS, TMNS…SGPW, and NSTQ…ADKV. Over residues 393–402 the composition is skewed to basic and acidic residues; sequence PPKKRTDSSR. Positions 444–462 are enriched in low complexity; the sequence is RSSTRDLFGSSSSGSYSAR. Over residues 473-482 the composition is skewed to polar residues; that stretch reads ASRSTNSYHY. Residues 495–526 are compositionally biased toward basic and acidic residues; that stretch reads AARHVRDAQERRESRDSGRGSSRKESKDRSDK. 2 stretches are compositionally biased toward low complexity: residues 527-551 and 563-573; these read SASS…SPPS and TMNSTNSSTNS. Residues 574 to 590 show a composition bias toward polar residues; the sequence is LIAGNSQTSIGSTSGPW. Positions 780 to 796 are enriched in low complexity; that stretch reads DSSVGSACSDSESNASS. Polar residues predominate over residues 823 to 837; it reads SMRSVGSGTANSYKS. Residues 850–876 are compositionally biased toward low complexity; sequence ASSSSASNRYGPSSSSSGSYSNNADYS. Polar residues predominate over residues 882-903; sequence SQRSNGSSAPKNQYSPGSQRSF.

It belongs to the protein kinase superfamily. CAMK Ser/Thr protein kinase family. SNF1 subfamily. As to quaternary structure, interacts with strd-1 and nab-1. The cofactor is Mg(2+). Expressed in neurons. Colocalizes with strd-1 along the dorsal nerve cord.

The protein localises to the synapse. It carries out the reaction L-seryl-[protein] + ATP = O-phospho-L-seryl-[protein] + ADP + H(+). The enzyme catalyses L-threonyl-[protein] + ATP = O-phospho-L-threonyl-[protein] + ADP + H(+). In terms of biological role, regulates both neuronal polarity and synaptic organization when bound to strd-1. Kinase activity is required for the establishment, but not the maintenance, of both processes. Binding to nab-1 is essential for role in restricting axonal fate during neuronal polarization but is not required for regulating synapse morphology. In Caenorhabditis elegans, this protein is Serine/threonine kinase SAD-1.